The chain runs to 75 residues: UPF0352 protein YejL (75 aa).

Belongs to the UPF0352 family.

The sequence is that of UPF0352 protein YejL from Salmonella agona (strain SL483).